We begin with the raw amino-acid sequence, 321 residues long: Phospho-N-acetylmuramoyl-pentapeptide-transferase (321 aa).

The next 10 membrane-spanning stretches (helical) occupy residues 6–26 (IFIP…LFIG), 54–74 (MGGV…GLFF), 77–97 (FTPS…LGYL), 117–137 (LIGQ…EGFS), 143–163 (FGVA…FWLV), 175–195 (IDGL…IIAW), 200–220 (FDVV…FPYN), 226–246 (IFMG…ISII), 251–271 (WTLL…ILQV), and 301–321 (IDFV…WILF).

Belongs to the glycosyltransferase 4 family. MraY subfamily. Mg(2+) serves as cofactor.

The protein resides in the cell membrane. It catalyses the reaction UDP-N-acetyl-alpha-D-muramoyl-L-alanyl-gamma-D-glutamyl-L-lysyl-D-alanyl-D-alanine + di-trans,octa-cis-undecaprenyl phosphate = Mur2Ac(oyl-L-Ala-gamma-D-Glu-L-Lys-D-Ala-D-Ala)-di-trans,octa-cis-undecaprenyl diphosphate + UMP. It functions in the pathway cell wall biogenesis; peptidoglycan biosynthesis. In terms of biological role, catalyzes the initial step of the lipid cycle reactions in the biosynthesis of the cell wall peptidoglycan: transfers peptidoglycan precursor phospho-MurNAc-pentapeptide from UDP-MurNAc-pentapeptide onto the lipid carrier undecaprenyl phosphate, yielding undecaprenyl-pyrophosphoryl-MurNAc-pentapeptide, known as lipid I. The polypeptide is Phospho-N-acetylmuramoyl-pentapeptide-transferase (Enterococcus faecalis (strain ATCC 700802 / V583)).